Consider the following 78-residue polypeptide: Large ribosomal subunit protein bL28 (78 aa).

The tract at residues 1-21 is disordered; sequence MARVCQVTGKGPMTGNNVSHA.

The protein belongs to the bacterial ribosomal protein bL28 family.

In Bordetella petrii (strain ATCC BAA-461 / DSM 12804 / CCUG 43448), this protein is Large ribosomal subunit protein bL28.